The chain runs to 174 residues: ATP synthase subunit delta (174 aa).

It belongs to the ATPase delta chain family. In terms of assembly, F-type ATPases have 2 components, F(1) - the catalytic core - and F(0) - the membrane proton channel. F(1) has five subunits: alpha(3), beta(3), gamma(1), delta(1), epsilon(1). F(0) has three main subunits: a(1), b(2) and c(10-14). The alpha and beta chains form an alternating ring which encloses part of the gamma chain. F(1) is attached to F(0) by a central stalk formed by the gamma and epsilon chains, while a peripheral stalk is formed by the delta and b chains.

The protein localises to the cell inner membrane. Its function is as follows. F(1)F(0) ATP synthase produces ATP from ADP in the presence of a proton or sodium gradient. F-type ATPases consist of two structural domains, F(1) containing the extramembraneous catalytic core and F(0) containing the membrane proton channel, linked together by a central stalk and a peripheral stalk. During catalysis, ATP synthesis in the catalytic domain of F(1) is coupled via a rotary mechanism of the central stalk subunits to proton translocation. Functionally, this protein is part of the stalk that links CF(0) to CF(1). It either transmits conformational changes from CF(0) to CF(1) or is implicated in proton conduction. The chain is ATP synthase subunit delta from Francisella tularensis subsp. mediasiatica (strain FSC147).